Here is a 205-residue protein sequence, read N- to C-terminus: MSAIAPGMILLAYLCGSISSAILVCRIAGLPDPRDSGSGNPGATNVLRIGGKGAALAVLIFDVLKGMLPVWGAYALGVTPFWLGLIAIAACLGHIWPIFFHFRGGKGVATAFGAIAPIGWDLTGVMAGTWLLTVLLSGYSSLGAIVSALVAPFYVWWFKPQFTFPVAMLSCLILLRHHDNIQRLWRGQESKIWSRFRKKRPQKKE.

The next 4 helical transmembrane spans lie at 4–24 (IAPGMILLAYLCGSISSAILV), 80–100 (PFWLGLIAIAACLGHIWPIFF), 112–132 (FGAIAPIGWDLTGVMAGTWLL), and 138–158 (GYSSLGAIVSALVAPFYVWWF).

Belongs to the PlsY family. In terms of assembly, probably interacts with PlsX.

The protein resides in the cell inner membrane. It catalyses the reaction an acyl phosphate + sn-glycerol 3-phosphate = a 1-acyl-sn-glycero-3-phosphate + phosphate. Its pathway is lipid metabolism; phospholipid metabolism. Functionally, catalyzes the transfer of an acyl group from acyl-phosphate (acyl-PO(4)) to glycerol-3-phosphate (G3P) to form lysophosphatidic acid (LPA). This enzyme utilizes acyl-phosphate as fatty acyl donor, but not acyl-CoA or acyl-ACP. In Cronobacter sakazakii (strain ATCC BAA-894) (Enterobacter sakazakii), this protein is Glycerol-3-phosphate acyltransferase.